Consider the following 267-residue polypeptide: Indole-3-glycerol phosphate synthase (267 aa).

The protein belongs to the TrpC family.

It carries out the reaction 1-(2-carboxyphenylamino)-1-deoxy-D-ribulose 5-phosphate + H(+) = (1S,2R)-1-C-(indol-3-yl)glycerol 3-phosphate + CO2 + H2O. It functions in the pathway amino-acid biosynthesis; L-tryptophan biosynthesis; L-tryptophan from chorismate: step 4/5. This Deinococcus radiodurans (strain ATCC 13939 / DSM 20539 / JCM 16871 / CCUG 27074 / LMG 4051 / NBRC 15346 / NCIMB 9279 / VKM B-1422 / R1) protein is Indole-3-glycerol phosphate synthase.